We begin with the raw amino-acid sequence, 56 residues long: Large ribosomal subunit protein bL33 (56 aa).

This sequence belongs to the bacterial ribosomal protein bL33 family.

This Treponema pallidum (strain Nichols) protein is Large ribosomal subunit protein bL33 (rpmG).